We begin with the raw amino-acid sequence, 331 residues long: UDP-N-acetylenolpyruvoylglucosamine reductase (331 aa).

The 168-residue stretch at 54–221 (RVGGAAELYV…TQATFQLQPG (168 aa)) folds into the FAD-binding PCMH-type domain. Arg200 is a catalytic residue. The active-site Proton donor is the Ser251. Glu321 is a catalytic residue.

This sequence belongs to the MurB family. It depends on FAD as a cofactor.

It localises to the cytoplasm. It carries out the reaction UDP-N-acetyl-alpha-D-muramate + NADP(+) = UDP-N-acetyl-3-O-(1-carboxyvinyl)-alpha-D-glucosamine + NADPH + H(+). The protein operates within cell wall biogenesis; peptidoglycan biosynthesis. In terms of biological role, cell wall formation. This chain is UDP-N-acetylenolpyruvoylglucosamine reductase, found in Nostoc sp. (strain PCC 7120 / SAG 25.82 / UTEX 2576).